A 136-amino-acid chain; its full sequence is Transcription antitermination protein NusB (136 aa).

This sequence belongs to the NusB family.

Involved in transcription antitermination. Required for transcription of ribosomal RNA (rRNA) genes. Binds specifically to the boxA antiterminator sequence of the ribosomal RNA (rrn) operons. This chain is Transcription antitermination protein NusB, found in Salinispora arenicola (strain CNS-205).